The primary structure comprises 313 residues: Olfactory receptor 4E2 (313 aa).

Over 1 to 25 (MDSLNQTRVTEFVFLGLTDNRVLEM) the chain is Extracellular. N5 carries N-linked (GlcNAc...) asparagine glycosylation. A helical membrane pass occupies residues 26-49 (LFFMAFSAIYMLTLSGNILIIIAT). The Cytoplasmic segment spans residues 50 to 57 (VFTPSLHT). The chain crosses the membrane as a helical span at residues 58 to 79 (PMYFFLSNLSFIDICHSSVTVP). At 80–100 (KMLEGLLLERKTISFDNCITQ) the chain is on the extracellular side. C97 and C179 form a disulfide bridge. A helical transmembrane segment spans residues 101–120 (LFFLHLFACAEIFLLIIVAY). Residues H105 and C109 each coordinate Cu cation. Residues 121–139 (DRYVAICTPLHYPNVMNMR) are Cytoplasmic-facing. A helical transmembrane segment spans residues 140 to 158 (VCIQLVFALWLGGTVHSLG). Residues 159-195 (QTFLTIRLPYCGPNIIDSYFCDVPLVIKLACTDTYLT) lie on the Extracellular side of the membrane. Residues 196-219 (GILIVTNSGTISLSCFLAVVTSYM) traverse the membrane as a helical segment. The Cytoplasmic segment spans residues 220 to 235 (VILVSLRKHSAEGRQK). The helical transmembrane segment at 236–258 (ALSTCSAHFMVVALFFGPCIFIY) threads the bilayer. The Extracellular segment spans residues 259–269 (TRPDTSFSIDK). Residue R260 participates in Cu cation binding. Residues 270–289 (VVSVFYTVVTPLLNPFIYTL) form a helical membrane-spanning segment. At 290-313 (RNEEVKSAMKQLRQRQVFFTKSYT) the chain is on the cytoplasmic side.

The protein belongs to the G-protein coupled receptor 1 family.

It is found in the cell membrane. Its activity is regulated as follows. Copper binding enhances receptor activity in response to odorant binding. In terms of biological role, olfactory receptor that is activated by the binding of organosulfur odorants with thioether groups such as (methylthio)methanethiol (MTMT) and bis(methylthiomethyl) disulfide. Also binds odorants cis-cyclooctene and tert-butyl mercaptan. The activity of this receptor is mediated by G proteins which activate adenylyl cyclase. The polypeptide is Olfactory receptor 4E2 (Homo sapiens (Human)).